Consider the following 551-residue polypeptide: Glutamate--tRNA ligase (551 aa).

The 'HIGH' region signature appears at 100-110 (PNPNGPPTLGS).

This sequence belongs to the class-I aminoacyl-tRNA synthetase family. Glutamate--tRNA ligase type 2 subfamily.

Its subcellular location is the cytoplasm. It catalyses the reaction tRNA(Glu) + L-glutamate + ATP = L-glutamyl-tRNA(Glu) + AMP + diphosphate. Catalyzes the attachment of glutamate to tRNA(Glu) in a two-step reaction: glutamate is first activated by ATP to form Glu-AMP and then transferred to the acceptor end of tRNA(Glu). This Archaeoglobus fulgidus (strain ATCC 49558 / DSM 4304 / JCM 9628 / NBRC 100126 / VC-16) protein is Glutamate--tRNA ligase.